Here is a 2024-residue protein sequence, read N- to C-terminus: Pericentriolar material 1 protein (2024 aa).

Residues 1 to 92 (MATGGGPFED…FPHSRYMSQM (92 aa)) form a disordered region. An N-acetylalanine modification is found at Ala-2. The interval 2-1460 (ATGGGPFEDG…TWIASNSELT (1459 aa)) is mediates interaction with DZIP1. The span at 43–61 (RSSEKNKKKFGVESDKRVT) shows a compositional bias: basic and acidic residues. Phosphoserine occurs at positions 65, 68, 69, 93, 110, 116, and 119. The segment at 111–163 (DLDQRSIGSDSQGRATAANNKRQLSENRKPFNFLPMQINTNKSKDASTNPPNR) is disordered. Polar residues-rich tracts occupy residues 116 to 132 (SIGSDSQGRATAANNKR) and 147 to 163 (QINTNKSKDASTNPPNR). Asn-159 is subject to Phosphoserine; in variant Ser-159. Residues 218-301 (KASSMREDLV…QLRALQGRQA (84 aa)) are a coiled coil. Positions 354-392 (RDSQPPAVPDNRRQAESLSLTREVSQSRKPSASERLPDE) are disordered. The segment covering 369–383 (ESLSLTREVSQSRKP) has biased composition (polar residues). Residue Ser-370 is modified to Phosphoserine. At Ser-372 the chain carries Phosphoserine; by PLK4. Residue Ser-384 is modified to Phosphoserine. An N6-acetyllysine modification is found at Lys-399. Positions 400–424 (MRVLQEKKQKMDKLLGELHTLRDQH) form a coiled coil. Disordered stretches follow at residues 421–492 (RDQH…KLQK) and 523–548 (ENRKDEETEESEYDSEHENSEPVTNI). 2 stretches are compositionally biased toward polar residues: residues 425–445 (LNNSSSSPQRSVDQRSTSAPS) and 456–477 (GESNSLTSSVPYPTASLVSQNE). Positions 487–543 (SEKLQKLNEVRKRLNELRELVHYYEQTSDMMTDAVNENRKDEETEESEYDSEHENSE) form a coiled coil. Phosphoserine is present on Ser-588. Disordered regions lie at residues 614–652 (HVAQGEDDEEEEEEAEEEGVSGASLSSHRSSLVDEHPED) and 699–726 (FYPAEEDTKQNSNNTRGNANKTQKDTGV). Over residues 618–632 (GEDDEEEEEEAEEEG) the composition is skewed to acidic residues. The span at 634 to 643 (SGASLSSHRS) shows a compositional bias: low complexity. A Phosphoserine modification is found at Ser-643. Residues 651–682 (EDAEFEQKINRLMAAKQKLRQLQDLVAMVQDD) adopt a coiled-coil conformation. Residues 708-719 (QNSNNTRGNANK) show a composition bias toward polar residues. Coiled coils occupy residues 726–769 (VNEK…LQTA) and 824–858 (SEMRRHEMLREELRQRRKQLEALMAEHQRRQGLAE). Position 859 is a phosphothreonine (Thr-859). Residues Ser-861, Ser-866, Ser-869, and Ser-872 each carry the phosphoserine modification. Phosphothreonine is present on Thr-877. The tract at residues 915-947 (TDEEEEEEQDASSNDNFSVCPSNSVNHNSYNGK) is disordered. Positions 925 to 946 (ASSNDNFSVCPSNSVNHNSYNG) are enriched in polar residues. A phosphoserine mark is found at Ser-960, Ser-977, Ser-988, and Ser-991. Positions 1063–1089 (TQLTWQQNNVQRLKQMLNELMRQQNQH) form a coiled coil. Disordered stretches follow at residues 1085 to 1109 (QQNQHPEKPGGKERGSSASHPPSPS) and 1152 to 1211 (FSQN…RTPW). Positions 1089–1099 (HPEKPGGKERG) are enriched in basic and acidic residues. A compositionally biased stretch (polar residues) spans 1152–1173 (FSQNISTPSEQQQPLAQNSSGK). Phosphoserine occurs at positions 1185 and 1188. The span at 1192–1201 (EKPRNKKLPE) shows a compositional bias: basic and acidic residues. Residues Ser-1229 and Ser-1231 each carry the phosphoserine modification. The span at 1232–1246 (VEKSTSSNRKNQLDT) shows a compositional bias: polar residues. Positions 1232–1342 (VEKSTSSNRK…RHSAQTEEPV (111 aa)) are disordered. Phosphoserine is present on residues Ser-1257, Ser-1260, Ser-1262, and Ser-1263. The tract at residues 1279-1799 (TRKASAQASL…TQALTNYGSG (521 aa)) is interaction with HAP1. Positions 1296–1313 (KSKSKKRNSTQLKSRVKN) are enriched in basic residues. A phosphoserine mark is found at Ser-1318 and Ser-1320. The residue at position 1468 (Thr-1468) is a Phosphothreonine. Residues 1515–1539 (IHLDQALARMREYERMKTEAESNSN) are a coiled coil. 7 positions are modified to phosphoserine: Ser-1573, Ser-1697, Ser-1730, Ser-1765, Ser-1768, Ser-1776, and Ser-1782. Disordered stretches follow at residues 1725–1868 (LEDH…NNCP) and 1880–1944 (EQPL…PVLV). Acidic residues predominate over residues 1768–1777 (SDQEEDEESE). Over residues 1783–1797 (INLSKAETQALTNYG) the composition is skewed to polar residues. Residues 1799–1815 (GEDENEDEEMEEFEEGP) show a composition bias toward acidic residues. The segment covering 1818-1827 (VQTSLQANTE) has biased composition (polar residues). Over residues 1835 to 1860 (DEQVLQRDFKKTAESKNVPLEREATS) the composition is skewed to basic and acidic residues. Residues 1905-1916 (PLRLPEMEPLVP) show a composition bias toward low complexity. An interaction with BBS4 region spans residues 1913 to 2024 (PLVPRVKEVK…EPETVGAQSI (112 aa)). Polar residues predominate over residues 1924–1933 (AQETPESSLA). A phosphoserine mark is found at Ser-1958 and Ser-1977. The interval 2005–2024 (ELAGNSETLKEPETVGAQSI) is disordered.

Belongs to the PCM1 family. Self-associates. Interacts with C2CD3. Interacts with BBS4, BBS8, CETN3, HAP1, NDE1, NDEL1, MAP1LC3B, GABARAPAL2, and GABARAP. Interacts with CEP131; the interaction increases in response to ultraviolet light (UV) radiation. Associates with microtubule; association to microtubule is reduced in response to cellular stress, such as ultraviolet light (UV) radiation or heat shock, in a process that requires p38 MAP kinase signaling. Interacts with CFAP263. Interacts with SSX2IP. Interacts with CCDC13. Interacts with CEP290. Interacts with PARD6A. Interacts with KIAA0753/OFIP, CEP20/FOR20 and OFD1; the interaction with CEP20/FOR20 and OFD1 may be mediated by KIAA0753/OFIP. Interacts with CCDC66. Interacts with CCDC61. Interacts with DZIP1; localizes DZIP1 and the associated BBSome to centriolar satellite. Interacts with CSTPP1, TTLL1, TPGS1 and LRRC49. Interacts with CFAP53. In terms of processing, ubiquitinated. Undergoes monoubiquitination catalyzed by the E3 ubiquitin-protein ligase MIB1 in proliferating cells, preventing cilia formation. Monoubiquitination by MIB1 is inhibited in response to cellular stress, such as ultraviolet light (UV) radiation or heat shock, resulting in cilia formation initiation. Variant Ser-159 is phosphorylated. Post-translationally, phosphorylated on multiple serine and threonine residues by DYRK3 during the G2-to-M transition, after the nuclear-envelope breakdown. Phosphorylation by DYRK3 promotes disassembly of pericentriolar material. Phosphorylation at Ser-372 mediated by PLK4 is required to maintain the integrity of centriolar satellites. In terms of tissue distribution, expressed in blood, bone marrow, breast, lymph node, ovary and thyroid.

It is found in the cytoplasm. It localises to the cytoskeleton. Its subcellular location is the microtubule organizing center. The protein localises to the centrosome. The protein resides in the cytoplasmic granule. It is found in the centriolar satellite. It localises to the cilium basal body. Functionally, required for centrosome assembly and function. Essential for the correct localization of several centrosomal proteins including CEP250, CETN3, PCNT and NEK2. Required to anchor microtubules to the centrosome. Also involved in cilium biogenesis by recruiting the BBSome, a ciliary protein complex involved in cilium biogenesis, to the centriolar satellites. Recruits the tubulin polyglutamylase complex (TPGC) to centriolar satellites. The chain is Pericentriolar material 1 protein from Homo sapiens (Human).